Reading from the N-terminus, the 602-residue chain is Elongation factor 4 (602 aa).

Residues 7–188 (ENIRNFSIIA…AIIDLVPPPK (182 aa)) form the tr-type G domain. GTP-binding positions include 19 to 24 (DHGKST) and 135 to 138 (NKID).

The protein belongs to the TRAFAC class translation factor GTPase superfamily. Classic translation factor GTPase family. LepA subfamily.

It is found in the cell inner membrane. The enzyme catalyses GTP + H2O = GDP + phosphate + H(+). Required for accurate and efficient protein synthesis under certain stress conditions. May act as a fidelity factor of the translation reaction, by catalyzing a one-codon backward translocation of tRNAs on improperly translocated ribosomes. Back-translocation proceeds from a post-translocation (POST) complex to a pre-translocation (PRE) complex, thus giving elongation factor G a second chance to translocate the tRNAs correctly. Binds to ribosomes in a GTP-dependent manner. This is Elongation factor 4 from Chlamydia pneumoniae (Chlamydophila pneumoniae).